Here is a 397-residue protein sequence, read N- to C-terminus: Lysophospholipid transporter LplT (397 aa).

The Periplasmic portion of the chain corresponds to 1–17 (MSESVHTNTSLWSKGMK). A helical transmembrane segment spans residues 18–38 (AVIVAQFLSAFGDNALLFATL). The Cytoplasmic portion of the chain corresponds to 39-52 (ALLKAQFYPEWSQP). A helical transmembrane segment spans residues 53–73 (VLQMVFVGAYILFAPFVGQVA). Residues 74–90 (DSFAKGRVMMFANGLKL) are Periplasmic-facing. Residues 91-111 (LGAASICFGFNPFVGYTLVGI) traverse the membrane as a helical segment. The Cytoplasmic segment spans residues 112 to 144 (GAAAYSPAKYGILGELTTGDKLVKANGLMEAST). The helical transmembrane segment at 145–165 (IAAILLGSVAGGVLADLHVLV) threads the bilayer. Residue Ala166 is a topological domain, periplasmic. The chain crosses the membrane as a helical span at residues 167 to 187 (LAACALAYAGAVAANIYIPKL). The Cytoplasmic segment spans residues 188–226 (AAARPGQSWNVLKMTCSFKSACTSLWQNGETRFSLVGTS). Residues 227-247 (LFWGAGVTLRFLLVLWVPVAL) form a helical membrane-spanning segment. At 248-256 (GITDNATPT) the chain is on the periplasmic side. The chain crosses the membrane as a helical span at residues 257–277 (YLNAMVAIGIVLGAGAAAKLV). Residues 278-280 (TLE) lie on the Cytoplasmic side of the membrane. A helical transmembrane segment spans residues 281 to 301 (TVSRCMPAGILIGVVVLFFSL). Topologically, residues 302 to 304 (QHE) are periplasmic. Residues 305–325 (LLPAYALLMLIGVLGGFFVVP) traverse the membrane as a helical segment. Over 326–343 (LNALLQERGKKSVGAGNA) the chain is Cytoplasmic. Residues 344–364 (IAVQNLGENSAMLLMLGIYSL) form a helical membrane-spanning segment. Topologically, residues 365-366 (AV) are periplasmic. A helical membrane pass occupies residues 367-387 (LVGIPVVPIGIGFGTLFALAI). Residues 388 to 397 (TALWIWQRRH) lie on the Cytoplasmic side of the membrane.

This sequence belongs to the major facilitator superfamily. LplT (TC 2.A.1.42) family.

It is found in the cell inner membrane. Its function is as follows. Catalyzes the facilitated diffusion of 2-acyl-glycero-3-phosphoethanolamine (2-acyl-GPE) into the cell. The protein is Lysophospholipid transporter LplT of Escherichia fergusonii (strain ATCC 35469 / DSM 13698 / CCUG 18766 / IAM 14443 / JCM 21226 / LMG 7866 / NBRC 102419 / NCTC 12128 / CDC 0568-73).